A 566-amino-acid chain; its full sequence is MKQSMVFSPTLREVPADAEIKSHQLLLRAGFMRQNASGIYSFLPFGLKVLHKVERIVREEMERAGAVELLMPAMQAAELWQESGRWYSYGSELMRMKDRNAREFALGATHEEVITDLVRDEVKSYKKLPLTLYQIQTKFRDEQRPRFGLLRGREFLMKDAYSFHATQESLDEVYDRLYKAYSNIFARCGLNFRAVIADSGAMGGKDTHEFMVLSDVGEDTIAYSDTSDYAANIEMAPVVATYTKSDEAEKELEKVATPDQKAIEEVSAFLNIEADKCIKSMVFKVDEKLVVVLVRGDHEVNDVKVKNVYGASVVELASHEEIKELLNCEVGSLGPIGVNGDIEIIADHAVASIVNGCSGANEEGFHYVNVNPERDFKVSQYTDLRFIQEGDQSPDGNGTILFARGIEVGHVFKLGTRYSEAMNATFLDENGKTQPLIMGCYGIGVSRTVAAIAEQFNDENGLVWPKAVAPFHVHVIPVNMKSDAQREMGENIYNSLQEQGYEVLLDDRAERAGVKFADADLFGLPVRVTVGKKADEGIVEVKVRATGESEEVKVEELQTYIANILK.

Belongs to the class-II aminoacyl-tRNA synthetase family. ProS type 1 subfamily. As to quaternary structure, homodimer.

The protein localises to the cytoplasm. It carries out the reaction tRNA(Pro) + L-proline + ATP = L-prolyl-tRNA(Pro) + AMP + diphosphate. Its function is as follows. Catalyzes the attachment of proline to tRNA(Pro) in a two-step reaction: proline is first activated by ATP to form Pro-AMP and then transferred to the acceptor end of tRNA(Pro). As ProRS can inadvertently accommodate and process non-cognate amino acids such as alanine and cysteine, to avoid such errors it has two additional distinct editing activities against alanine. One activity is designated as 'pretransfer' editing and involves the tRNA(Pro)-independent hydrolysis of activated Ala-AMP. The other activity is designated 'posttransfer' editing and involves deacylation of mischarged Ala-tRNA(Pro). The misacylated Cys-tRNA(Pro) is not edited by ProRS. This Bacillus thuringiensis subsp. konkukian (strain 97-27) protein is Proline--tRNA ligase 1.